The sequence spans 486 residues: UDP-N-acetylmuramate--L-alanine ligase (486 aa).

An ATP-binding site is contributed by 126 to 132; the sequence is GTHGKTT.

Belongs to the MurCDEF family.

The protein resides in the cytoplasm. It catalyses the reaction UDP-N-acetyl-alpha-D-muramate + L-alanine + ATP = UDP-N-acetyl-alpha-D-muramoyl-L-alanine + ADP + phosphate + H(+). The protein operates within cell wall biogenesis; peptidoglycan biosynthesis. Cell wall formation. In Pectobacterium atrosepticum (strain SCRI 1043 / ATCC BAA-672) (Erwinia carotovora subsp. atroseptica), this protein is UDP-N-acetylmuramate--L-alanine ligase.